We begin with the raw amino-acid sequence, 205 residues long: High frequency lysogenization protein HflD homolog (205 aa).

Belongs to the HflD family.

The protein localises to the cytoplasm. The protein resides in the cell inner membrane. The polypeptide is High frequency lysogenization protein HflD homolog (Haemophilus influenzae (strain ATCC 51907 / DSM 11121 / KW20 / Rd)).